Here is a 416-residue protein sequence, read N- to C-terminus: Imidazolonepropionase (416 aa).

Positions 81 and 83 each coordinate Fe(3+). 2 residues coordinate Zn(2+): His81 and His83. 4-imidazolone-5-propanoate contacts are provided by Arg90, Tyr153, and His186. N-formimidoyl-L-glutamate is bound at residue Tyr153. His251 lines the Fe(3+) pocket. His251 serves as a coordination point for Zn(2+). Gln254 is a binding site for 4-imidazolone-5-propanoate. Asp326 provides a ligand contact to Fe(3+). Asp326 is a binding site for Zn(2+). Positions 328 and 330 each coordinate N-formimidoyl-L-glutamate. Thr331 contacts 4-imidazolone-5-propanoate.

This sequence belongs to the metallo-dependent hydrolases superfamily. HutI family. Requires Zn(2+) as cofactor. Fe(3+) serves as cofactor.

It is found in the cytoplasm. The enzyme catalyses 4-imidazolone-5-propanoate + H2O = N-formimidoyl-L-glutamate. The protein operates within amino-acid degradation; L-histidine degradation into L-glutamate; N-formimidoyl-L-glutamate from L-histidine: step 3/3. Its function is as follows. Catalyzes the hydrolytic cleavage of the carbon-nitrogen bond in imidazolone-5-propanoate to yield N-formimidoyl-L-glutamate. It is the third step in the universal histidine degradation pathway. This Paracidovorax citrulli (strain AAC00-1) (Acidovorax citrulli) protein is Imidazolonepropionase.